A 317-amino-acid polypeptide reads, in one-letter code: Putative HTH-type transcriptional regulatory protein TGAM_1316 (317 aa).

In terms of domain architecture, HTH cro/C1-type spans 131–189 (LKKLREKHGYSVGELASLLGVSRKSLLNYERNEQAVSLEVALRMEELFDEPIAEPIDVL). The H-T-H motif DNA-binding region spans 142–161 (VGELASLLGVSRKSLLNYER).

This Thermococcus gammatolerans (strain DSM 15229 / JCM 11827 / EJ3) protein is Putative HTH-type transcriptional regulatory protein TGAM_1316.